The sequence spans 316 residues: Acetyl-coenzyme A carboxylase carboxyl transferase subunit alpha (316 aa).

Residues 39–293 (RLQDKSKALT…RGELLTQLKM (255 aa)) enclose the CoA carboxyltransferase C-terminal domain.

It belongs to the AccA family. Acetyl-CoA carboxylase is a heterohexamer composed of biotin carboxyl carrier protein (AccB), biotin carboxylase (AccC) and two subunits each of ACCase subunit alpha (AccA) and ACCase subunit beta (AccD).

The protein resides in the cytoplasm. It catalyses the reaction N(6)-carboxybiotinyl-L-lysyl-[protein] + acetyl-CoA = N(6)-biotinyl-L-lysyl-[protein] + malonyl-CoA. It participates in lipid metabolism; malonyl-CoA biosynthesis; malonyl-CoA from acetyl-CoA: step 1/1. Component of the acetyl coenzyme A carboxylase (ACC) complex. First, biotin carboxylase catalyzes the carboxylation of biotin on its carrier protein (BCCP) and then the CO(2) group is transferred by the carboxyltransferase to acetyl-CoA to form malonyl-CoA. The sequence is that of Acetyl-coenzyme A carboxylase carboxyl transferase subunit alpha from Pseudomonas aeruginosa (strain LESB58).